Reading from the N-terminus, the 546-residue chain is Chaperonin GroEL (546 aa).

ATP contacts are provided by residues 30–33, K51, 87–91, G415, 479–481, and D495; these read TLGP, DGTTT, and NAA. The interval 526–546 is disordered; that stretch reads KKGDSAPAGGGMGDMGGMGMM. A compositionally biased stretch (gly residues) spans 533–546; sequence AGGGMGDMGGMGMM.

It belongs to the chaperonin (HSP60) family. In terms of assembly, forms a cylinder of 14 subunits composed of two heptameric rings stacked back-to-back. Interacts with the co-chaperonin GroES.

It localises to the cytoplasm. The enzyme catalyses ATP + H2O + a folded polypeptide = ADP + phosphate + an unfolded polypeptide.. Its function is as follows. Together with its co-chaperonin GroES, plays an essential role in assisting protein folding. The GroEL-GroES system forms a nano-cage that allows encapsulation of the non-native substrate proteins and provides a physical environment optimized to promote and accelerate protein folding. The polypeptide is Chaperonin GroEL (Thioalkalivibrio sulfidiphilus (strain HL-EbGR7)).